A 454-amino-acid chain; its full sequence is N-myc 2 proto-oncogene protein (454 aa).

Disordered regions lie at residues 133–166, 231–270, and 326–374; these read EKMQ…HSGT, AAPP…EEEE, and SPYV…VRRR. The span at 256 to 270 shows a compositional bias: acidic residues; sequence ALSDEVDEEEDEEEE. Residues 363-374 are compositionally biased toward basic and acidic residues; the sequence is RKSDSEDSVRRR. One can recognise a bHLH domain in the interval 371–423; that stretch reads VRRRNHNILERQRRNDLRSSFTTLRDHVPELVKNEKAAKVVILKKACEYVHYL. Residues 423 to 444 form a leucine-zipper region; the sequence is LQAKEHQLLMEKEKLQARQQQL.

Efficient DNA binding requires dimerization with another bHLH protein.

The protein resides in the nucleus. In Otospermophilus beecheyi (California ground squirrel), this protein is N-myc 2 proto-oncogene protein (N-MYC2).